The primary structure comprises 436 residues: 3-ketoacyl-CoA thiolase (436 aa).

Cys99 (acyl-thioester intermediate) is an active-site residue. Residues His392 and Cys422 each act as proton acceptor in the active site.

It belongs to the thiolase-like superfamily. Thiolase family. Heterotetramer of two alpha chains (FadJ) and two beta chains (FadI).

The protein localises to the cytoplasm. The catalysed reaction is an acyl-CoA + acetyl-CoA = a 3-oxoacyl-CoA + CoA. Its pathway is lipid metabolism; fatty acid beta-oxidation. Catalyzes the final step of fatty acid oxidation in which acetyl-CoA is released and the CoA ester of a fatty acid two carbons shorter is formed. This Pseudoalteromonas atlantica (strain T6c / ATCC BAA-1087) protein is 3-ketoacyl-CoA thiolase.